A 499-amino-acid chain; its full sequence is Maturase K (499 aa).

It belongs to the intron maturase 2 family. MatK subfamily.

It localises to the plastid. It is found in the chloroplast. In terms of biological role, usually encoded in the trnK tRNA gene intron. Probably assists in splicing its own and other chloroplast group II introns. The polypeptide is Maturase K (Neltuma juliflora (Mesquite)).